The chain runs to 435 residues: Serine--tRNA ligase (435 aa).

The interval 41-70 is disordered; it reads QVKTEELQAQRNSRSKSIGQAKAKGDHEEA. The segment covering 49-58 has biased composition (polar residues); that stretch reads AQRNSRSKSI. Position 242-244 (242-244) interacts with L-serine; that stretch reads TAE. Residue 273–275 coordinates ATP; the sequence is RSE. Position 296 (E296) interacts with L-serine. Residue 360 to 363 participates in ATP binding; sequence EISS. An L-serine-binding site is contributed by S396.

The protein belongs to the class-II aminoacyl-tRNA synthetase family. Type-1 seryl-tRNA synthetase subfamily. Homodimer. The tRNA molecule binds across the dimer.

The protein localises to the cytoplasm. It catalyses the reaction tRNA(Ser) + L-serine + ATP = L-seryl-tRNA(Ser) + AMP + diphosphate + H(+). The catalysed reaction is tRNA(Sec) + L-serine + ATP = L-seryl-tRNA(Sec) + AMP + diphosphate + H(+). The protein operates within aminoacyl-tRNA biosynthesis; selenocysteinyl-tRNA(Sec) biosynthesis; L-seryl-tRNA(Sec) from L-serine and tRNA(Sec): step 1/1. In terms of biological role, catalyzes the attachment of serine to tRNA(Ser). Is also able to aminoacylate tRNA(Sec) with serine, to form the misacylated tRNA L-seryl-tRNA(Sec), which will be further converted into selenocysteinyl-tRNA(Sec). The chain is Serine--tRNA ligase from Aliivibrio fischeri (strain ATCC 700601 / ES114) (Vibrio fischeri).